The sequence spans 88 residues: Cell division topological specificity factor (88 aa).

The protein belongs to the MinE family.

Its function is as follows. Prevents the cell division inhibition by proteins MinC and MinD at internal division sites while permitting inhibition at polar sites. This ensures cell division at the proper site by restricting the formation of a division septum at the midpoint of the long axis of the cell. The chain is Cell division topological specificity factor from Escherichia fergusonii (strain ATCC 35469 / DSM 13698 / CCUG 18766 / IAM 14443 / JCM 21226 / LMG 7866 / NBRC 102419 / NCTC 12128 / CDC 0568-73).